The sequence spans 983 residues: Glycine dehydrogenase (decarboxylating) (983 aa).

N6-(pyridoxal phosphate)lysine is present on Lys726.

This sequence belongs to the GcvP family. As to quaternary structure, the glycine cleavage system is composed of four proteins: P, T, L and H. Requires pyridoxal 5'-phosphate as cofactor.

It catalyses the reaction N(6)-[(R)-lipoyl]-L-lysyl-[glycine-cleavage complex H protein] + glycine + H(+) = N(6)-[(R)-S(8)-aminomethyldihydrolipoyl]-L-lysyl-[glycine-cleavage complex H protein] + CO2. The glycine cleavage system catalyzes the degradation of glycine. The P protein binds the alpha-amino group of glycine through its pyridoxal phosphate cofactor; CO(2) is released and the remaining methylamine moiety is then transferred to the lipoamide cofactor of the H protein. The protein is Glycine dehydrogenase (decarboxylating) of Synechocystis sp. (strain ATCC 27184 / PCC 6803 / Kazusa).